The chain runs to 639 residues: CD2-associated protein (639 aa).

Residues 1 to 59 (MVDYIVEYDYDAVHDDELTIRVGEIIRNVKKLQEEGWLEGELNGRRGMFPDNFVKEIKR) enclose the SH3 1; truncated domain. The interval 1–175 (MVDYIVEYDY…EVTDDGETHE (175 aa)) is interaction with ANLN and localization to the midbody. K58 participates in a covalent cross-link: Glycyl lysine isopeptide (Lys-Gly) (interchain with G-Cter in SUMO2). A phosphoserine mark is found at S67, S80, and S86. The SH3 2 domain occupies 108 to 167 (TKKRQCKVLFEYIPQNEDELELKVGDIIDINEEVEEGWWSGTLNNKLGLFPSNFVKELEV). Basic and acidic residues predominate over residues 168–177 (TDDGETHEAQ). Positions 168-209 (TDDGETHEAQDDSETVLAGPTSPIPSLGNVSETASGSVTQPK) are disordered. The span at 195-207 (GNVSETASGSVTQ) shows a compositional bias: polar residues. S224 is modified (phosphoserine). The disordered stretch occupies residues 227 to 256 (LRTRTSSSETEEKKPEKPLILQSLGPKTQS). Residues 269-330 (KAKEYCRTLF…PDNFAVQINE (62 aa)) enclose the SH3 3 domain. The tract at residues 333–428 (KDFPKPKKPP…PPPPIAKING (96 aa)) is disordered. 3 short sequence motifs (SH3-binding) span residues 336-352 (PKPK…APKP), 378-397 (KPSK…PPTK), and 410-422 (PKRP…PPPP). Positions 341 to 351 (PPPPAKAPAPK) are enriched in pro residues. A compositionally biased stretch (basic and acidic residues) spans 356 to 379 (AAEKKYFSLKPEEKDEKSTLEQKP). Residues 385–395 (PQVPPKKPTPP) are compositionally biased toward pro residues. Phosphoserine is present on residues S458, S463, S469, S510, and S514. K523 is covalently cross-linked (Glycyl lysine isopeptide (Lys-Gly) (interchain with G-Cter in SUMO2)). A Phosphothreonine modification is found at T565. A coiled-coil region spans residues 577 to 638 (DVKKNSLDEL…IEKLKKAVLS (62 aa)). The residue at position 582 (S582) is a Phosphoserine.

In terms of assembly, homodimer. Interacts with F-actin, PKD2, NPHS1 and NPHS2. Interacts with WTIP. Interacts with DDN; interaction is direct. Interacts (via SH3 2 domain) with CBL (via phosphorylated C-terminus). Interacts with BCAR1/p130Cas (via SH3 domain). Interacts with MVB12A and ARHGAP17. Interacts with ANLN, CD2 and CBLB. Interacts with PDCD6IP and TSG101. Interacts with RIN3. Interacts directly with RET (inactive) and CBLC; upon RET activation by GDNF suggested to dissociate from RET as CBLC:CD2AP complex. Interacts with CGNL1 and SH3BP1; probably part of a complex at cell junctions. Interacts with CAPZA1. (Microbial infection) Interacts (via SH3 domains) with Chikungunya virus non-structural protein 3 (via C-terminus); this interaction plays a role in initiation of viral replication. In terms of processing, phosphorylated on tyrosine residues; probably by c-Abl, Fyn and c-Src. In terms of tissue distribution, widely expressed in fetal and adult tissues.

It localises to the cytoplasm. Its subcellular location is the cytoskeleton. It is found in the cell projection. The protein localises to the ruffle. The protein resides in the cell junction. In terms of biological role, seems to act as an adapter protein between membrane proteins and the actin cytoskeleton. In collaboration with CBLC, modulates the rate of RET turnover and may act as regulatory checkpoint that limits the potency of GDNF on neuronal survival. Controls CBLC function, converting it from an inhibitor to a promoter of RET degradation. May play a role in receptor clustering and cytoskeletal polarity in the junction between T-cell and antigen-presenting cell. May anchor the podocyte slit diaphragm to the actin cytoskeleton in renal glomerolus. Also required for cytokinesis. Plays a role in epithelial cell junctions formation. This chain is CD2-associated protein (CD2AP), found in Homo sapiens (Human).